Reading from the N-terminus, the 969-residue chain is Endogenous retrovirus group K member 11 Pol protein (969 aa).

The region spanning 57–245 (LEKGHIEPSF…TPFHYLGMQI (189 aa)) is the Reverse transcriptase domain. The short motif at 161-164 (LPQG) is the LPQG element. Residues 460 to 590 (LENALTVFTD…ADLLVSSALI (131 aa)) form the RNase H type-1 domain. The Mg(2+) site is built by Asp-469, Glu-497, Asp-517, and Asp-582. Residues 587–628 (SALIKAQELHALTHVNAAGLKNKFDVTWKQAKDIVQHCTQCQ) form an Integrase-type zinc finger. Residues His-596, His-600, Cys-624, and Cys-627 each coordinate Zn(2+). Residues 642–803 (RGLCPNALWQ…TSAEQHLTGK (162 aa)) enclose the Integrase catalytic domain. Positions 811–859 (KLIWWKDNKNKTWEIGKVITWGRGFACVSPGENQLPVWIPTRHLKFYNE) form a DNA-binding region, integrase-type.

This sequence belongs to the beta type-B retroviral polymerase family. HERV class-II K(HML-2) pol subfamily.

It carries out the reaction DNA(n) + a 2'-deoxyribonucleoside 5'-triphosphate = DNA(n+1) + diphosphate. The enzyme catalyses Endonucleolytic cleavage to 5'-phosphomonoester.. Its function is as follows. Early post-infection, the reverse transcriptase converts the viral RNA genome into double-stranded viral DNA. The RNase H domain of the reverse transcriptase performs two functions. It degrades the RNA template and specifically removes the RNA primer from the RNA/DNA hybrid. Following nuclear import, the integrase catalyzes the insertion of the linear, double-stranded viral DNA into the host cell chromosome. Endogenous Pol proteins may have kept, lost or modified their original function during evolution. This Homo sapiens (Human) protein is Endogenous retrovirus group K member 11 Pol protein (ERVK-11).